The sequence spans 159 residues: Large ribosomal subunit protein mL50 (159 aa).

Belongs to the mitochondrion-specific ribosomal protein mL50 family. Component of the mitochondrial ribosome large subunit (39S) which comprises a 16S rRNA and about 50 distinct proteins.

It is found in the mitochondrion. The polypeptide is Large ribosomal subunit protein mL50 (MRPL50) (Bos taurus (Bovine)).